The sequence spans 447 residues: GTPase Der (447 aa).

2 consecutive EngA-type G domains span residues 3–167 (PVVA…HLED) and 180–353 (IKLA…KAAN). Residues 9 to 16 (GRPNVGKS), 56 to 60 (DTGGF), 119 to 122 (NKAE), 186 to 193 (GRPNVGKS), 233 to 237 (DTAGL), and 298 to 301 (NKWD) contribute to the GTP site. Positions 354–438 (CKMSTPILTR…PMRIEFKSST (85 aa)) constitute a KH-like domain.

This sequence belongs to the TRAFAC class TrmE-Era-EngA-EngB-Septin-like GTPase superfamily. EngA (Der) GTPase family. Associates with the 50S ribosomal subunit.

GTPase that plays an essential role in the late steps of ribosome biogenesis. This Albidiferax ferrireducens (strain ATCC BAA-621 / DSM 15236 / T118) (Rhodoferax ferrireducens) protein is GTPase Der.